The chain runs to 642 residues: Threonine--tRNA ligase (642 aa).

The region spanning 1 to 61 is the TGS domain; that stretch reads MPVITLPDGS…ENDAQLSIIT (61 aa). Residues 243-534 form a catalytic region; that stretch reads DHRKIGKQLD…LTEEFAGFFP (292 aa). At Lys-286 the chain carries N6-acetyllysine. Zn(2+)-binding residues include Cys-334, His-385, and His-511.

It belongs to the class-II aminoacyl-tRNA synthetase family. Homodimer. Zn(2+) is required as a cofactor.

Its subcellular location is the cytoplasm. The catalysed reaction is tRNA(Thr) + L-threonine + ATP = L-threonyl-tRNA(Thr) + AMP + diphosphate + H(+). Functionally, catalyzes the attachment of threonine to tRNA(Thr) in a two-step reaction: L-threonine is first activated by ATP to form Thr-AMP and then transferred to the acceptor end of tRNA(Thr). Also edits incorrectly charged L-seryl-tRNA(Thr). This is Threonine--tRNA ligase from Escherichia coli O9:H4 (strain HS).